A 490-amino-acid polypeptide reads, in one-letter code: COP9 signalosome complex subunit 2 (490 aa).

Positions 1-30 (MSDDDFMQDSDQEYDFEYEDDEEEDTGDVD) are enriched in acidic residues. Residues 1–32 (MSDDDFMQDSDQEYDFEYEDDEEEDTGDVDIE) are disordered. The PCI domain occupies 250 to 418 (SEENWKEAQS…GVLELESRED (169 aa)). Residues 469-490 (DTMRSMGSGKRGRRVGLTQRAY) form a disordered region.

Belongs to the CSN2 family. In terms of assembly, component of the COP9 signalosome (CSN) complex.

The protein resides in the cytoplasm. The protein localises to the nucleus. In terms of biological role, component of the COP9 signalosome (CSN) complex that acts as an regulator of the ubiquitin (Ubl) conjugation pathway by mediating the deneddylation of the cullin subunit of SCF-type E3 ubiquitin-protein ligase complexes. The CSN complex is involved in the regulation of the circadian clock through its control of the stability of the SCF(FWD-1) complex. The polypeptide is COP9 signalosome complex subunit 2 (csn-2) (Neurospora crassa (strain ATCC 24698 / 74-OR23-1A / CBS 708.71 / DSM 1257 / FGSC 987)).